The following is a 1036-amino-acid chain: Isoleucine--tRNA ligase (1036 aa).

Positions 46–56 match the 'HIGH' region motif; sequence PFATGLPHYGH. Residues 589–593 carry the 'KMSKS' region motif; sequence KMSKR. Lys592 contacts ATP.

Belongs to the class-I aminoacyl-tRNA synthetase family. IleS type 2 subfamily. In terms of assembly, monomer. It depends on Zn(2+) as a cofactor.

Its subcellular location is the cytoplasm. It carries out the reaction tRNA(Ile) + L-isoleucine + ATP = L-isoleucyl-tRNA(Ile) + AMP + diphosphate. Functionally, catalyzes the attachment of isoleucine to tRNA(Ile). As IleRS can inadvertently accommodate and process structurally similar amino acids such as valine, to avoid such errors it has two additional distinct tRNA(Ile)-dependent editing activities. One activity is designated as 'pretransfer' editing and involves the hydrolysis of activated Val-AMP. The other activity is designated 'posttransfer' editing and involves deacylation of mischarged Val-tRNA(Ile). This is Isoleucine--tRNA ligase from Chlamydia muridarum (strain MoPn / Nigg).